We begin with the raw amino-acid sequence, 174 residues long: Disulfide bond formation protein B (174 aa).

Residues 1–17 (MSFQVVTGWLDNSPRRI) lie on the Cytoplasmic side of the membrane. Residues 18 to 34 (FAFVSLASIGMLAFGQY) form a helical membrane-spanning segment. Over 35–52 (LQHVVGLEPCPMCIVQRY) the chain is Periplasmic. An intrachain disulfide couples Cys44 to Cys47. A helical membrane pass occupies residues 53-67 (ALVLVAIIAGLTGAS). At 68–74 (GRKGLHL) the chain is on the cytoplasmic side. A helical membrane pass occupies residues 75-92 (GGAVLMLGSSGFGAYVAA). The Periplasmic segment spans residues 93-148 (RQSWLQWYPPEVVSCGRDFYGMIETFPLQRAIPMIFKGSGDCSKVDWTFLGGSIAN). A disulfide bridge links Cys107 with Cys134. The helical transmembrane segment at 149-167 (WTFVVFGLIVLLSLALIWR) threads the bilayer. Residues 168–174 (RVSRRVS) lie on the Cytoplasmic side of the membrane.

This sequence belongs to the DsbB family.

It localises to the cell inner membrane. Functionally, required for disulfide bond formation in some periplasmic proteins. Acts by oxidizing the DsbA protein. This Albidiferax ferrireducens (strain ATCC BAA-621 / DSM 15236 / T118) (Rhodoferax ferrireducens) protein is Disulfide bond formation protein B.